The primary structure comprises 60 residues: LKCKKLIPLFSKTCPEGKNLCYKMTMRLAPKVPVKRGCIDVCPKSSFLVKYECCDTDRCN.

4 disulfide bridges follow: C3-C21, C14-C38, C42-C53, and C54-C59.

Belongs to the three-finger toxin family. Short-chain subfamily. Type IA cytotoxin sub-subfamily. Monomer in solution; Homodimer and oligomer in the presence of negatively charged lipids forming a pore with a size ranging between 20 and 30 Angstroms. As to expression, expressed by the venom gland.

Its subcellular location is the secreted. The protein resides in the target cell membrane. Its function is as follows. Shows cytolytic activity on many different cells by forming pore in lipid membranes. In vivo, increases heart rate or kills the animal by cardiac arrest. In addition, it binds to heparin with high affinity, interacts with Kv channel-interacting protein 1 (KCNIP1) in a calcium-independent manner, and binds to integrin alpha-V/beta-3 (ITGAV/ITGB3) with moderate affinity. This is Cytotoxin 5 from Naja mossambica (Mozambique spitting cobra).